A 311-amino-acid chain; its full sequence is Beta-lactamase (311 aa).

Positions 1-34 (MRLTQAPPSRRTLMTLGAGATMAALLPAGGAAYA) form a signal peptide, tat-type signal. Residue serine 87 is the Acyl-ester intermediate of the active site. A substrate-binding site is contributed by 255-257 (KTG).

This sequence belongs to the class-A beta-lactamase family. Predicted to be exported by the Tat system. The position of the signal peptide cleavage has not been experimentally proven.

The catalysed reaction is a beta-lactam + H2O = a substituted beta-amino acid. The sequence is that of Beta-lactamase (bla) from Kitasatospora aureofaciens (Streptomyces aureofaciens).